A 455-amino-acid polypeptide reads, in one-letter code: Adenylyltransferase and sulfurtransferase MOCS3 (455 aa).

ATP contacts are provided by residues G90, D111, 118–122 (SNLAR), K135, and 179–180 (DN). The tract at residues 156-236 (AQALTPATAL…RPPPAETVTS (81 aa)) is interaction with NFS1. Residues C220 and C223 each coordinate Zn(2+). C237 functions as the Glycyl thioester intermediate; for adenylyltransferase activity in the catalytic mechanism. C295 and C298 together coordinate Zn(2+). A disulfide bond links C314 and C322. The Rhodanese domain maps to 345–453 (SRSPHLLLDV…WAAKIDGTFP (109 aa)). The active-site Cysteine persulfide intermediate; for sulfurtransferase activity is C410. Residue C410 is modified to Cysteine persulfide.

In the N-terminal section; belongs to the HesA/MoeB/ThiF family. UBA4 subfamily. As to quaternary structure, interacts with NFS1. The cofactor is Zn(2+).

The protein resides in the cytoplasm. The protein localises to the cytosol. The enzyme catalyses [molybdopterin-synthase sulfur-carrier protein]-C-terminal Gly-Gly + ATP + H(+) = [molybdopterin-synthase sulfur-carrier protein]-C-terminal Gly-Gly-AMP + diphosphate. It catalyses the reaction [molybdopterin-synthase sulfur-carrier protein]-C-terminal Gly-Gly-AMP + S-sulfanyl-L-cysteinyl-[cysteine desulfurase] + AH2 = [molybdopterin-synthase sulfur-carrier protein]-C-terminal-Gly-aminoethanethioate + L-cysteinyl-[cysteine desulfurase] + A + AMP + 2 H(+). The protein operates within tRNA modification; 5-methoxycarbonylmethyl-2-thiouridine-tRNA biosynthesis. It functions in the pathway cofactor biosynthesis; molybdopterin biosynthesis. Plays a central role in 2-thiolation of mcm(5)S(2)U at tRNA wobble positions of cytosolic tRNA(Lys), tRNA(Glu) and tRNA(Gln). Also essential during biosynthesis of the molybdenum cofactor. Acts by mediating the C-terminal thiocarboxylation of sulfur carriers URM1 and MOCS2A. Its N-terminus first activates URM1 and MOCS2A as acyl-adenylates (-COAMP), then the persulfide sulfur on the catalytic cysteine is transferred to URM1 and MOCS2A to form thiocarboxylation (-COSH) of their C-terminus. The reaction probably involves hydrogen sulfide that is generated from the persulfide intermediate and that acts as a nucleophile towards URM1 and MOCS2A. Subsequently, a transient disulfide bond is formed. Does not use thiosulfate as sulfur donor; NFS1 acting as a sulfur donor for thiocarboxylation reactions. The sequence is that of Adenylyltransferase and sulfurtransferase MOCS3 from Bos taurus (Bovine).